A 374-amino-acid chain; its full sequence is MKFELDTTDGRARRGRLIFDRGTVETPAFMPVGTYGTVKGMTPEEVRATGADILLGNTFHLWLRPGEEIMRKHGDLHDFMNWQRPILTDSGGFQVFSLGDIRKITEEGVHFRSPINGEKIFLDPEKSMQIQDALGSDVVMIFDECTPYPATEDEARKSMQMSLRWARRSRDEFDRLENPNSLFGIIQGGVYEDLRDESLKGLVDIGFDGYAVGGLAVGEPKADMHRILEHICPQIPADKPRYLMGVGKPEDLVEGVRRGVDMFDCVMPTRNARNGHLFTSEGVIKIRNARHRDDTSPLDTKCDCYTCKNYSRAYLYHLDRCNEILGARLNTIHNLRYYQMLMEGLRGAIETGTLDAFVADFYTSQGREVPELVD.

The Proton acceptor role is filled by Asp-89. Residues 89–93, Asp-143, Gln-187, and Gly-214 each bind substrate; that span reads DSGGF. An RNA binding region spans residues 245 to 251; the sequence is GVGKPED. Residue Asp-264 is the Nucleophile of the active site. The tract at residues 269–273 is RNA binding; important for wobble base 34 recognition; the sequence is TRNAR. Residues Cys-302, Cys-304, Cys-307, and His-333 each contribute to the Zn(2+) site.

It belongs to the queuine tRNA-ribosyltransferase family. As to quaternary structure, homodimer. Within each dimer, one monomer is responsible for RNA recognition and catalysis, while the other monomer binds to the replacement base PreQ1. The cofactor is Zn(2+).

It catalyses the reaction 7-aminomethyl-7-carbaguanine + guanosine(34) in tRNA = 7-aminomethyl-7-carbaguanosine(34) in tRNA + guanine. It functions in the pathway tRNA modification; tRNA-queuosine biosynthesis. In terms of biological role, catalyzes the base-exchange of a guanine (G) residue with the queuine precursor 7-aminomethyl-7-deazaguanine (PreQ1) at position 34 (anticodon wobble position) in tRNAs with GU(N) anticodons (tRNA-Asp, -Asn, -His and -Tyr). Catalysis occurs through a double-displacement mechanism. The nucleophile active site attacks the C1' of nucleotide 34 to detach the guanine base from the RNA, forming a covalent enzyme-RNA intermediate. The proton acceptor active site deprotonates the incoming PreQ1, allowing a nucleophilic attack on the C1' of the ribose to form the product. After dissociation, two additional enzymatic reactions on the tRNA convert PreQ1 to queuine (Q), resulting in the hypermodified nucleoside queuosine (7-(((4,5-cis-dihydroxy-2-cyclopenten-1-yl)amino)methyl)-7-deazaguanosine). This chain is Queuine tRNA-ribosyltransferase, found in Shewanella baltica (strain OS223).